The chain runs to 846 residues: Putative transcriptional regulator tpeD (846 aa).

Residues 104–166 (KHQSECWQHF…NCRKSVPVSK (63 aa)) form a BED-type; degenerate zinc finger. The segment at 734 to 846 (RAREERDAQQ…RDEDFVYETP (113 aa)) is disordered. The span at 756 to 769 (PISDSEEAESEDES) shows a compositional bias: acidic residues. Over residues 773-786 (PQSPQASQARSQRS) the composition is skewed to low complexity. The span at 797–809 (PLIELDGNEEDEV) shows a compositional bias: acidic residues.

It localises to the nucleus. Putative transcriptional regulator; part of the gene cluster that mediates the biosynthesis of polyesters containing 2,4-dihydroxy-6-(2-hydroxypropyl)benzoate and 3-hydroxybutyrate moieties, such as talapolyester G, 15G256beta and 15G256beta-2; as well as to oxidized derivatives such as 15G256alpha. In Talaromyces stipitatus (strain ATCC 10500 / CBS 375.48 / QM 6759 / NRRL 1006) (Penicillium stipitatum), this protein is Putative transcriptional regulator tpeD.